The sequence spans 1089 residues: Probable transport protein MmpL8 (1089 aa).

The disordered stretch occupies residues 1–26 (MCDVLMQPVRTPRPSTNLRSKPLRPT). The next 12 membrane-spanning stretches (helical) occupy residues 44–64 (WVVI…VPSL), 222–242 (ITIL…TMVL), 257–277 (LVAI…IFMS), 316–336 (IGKV…GMVF), 349–369 (LGIS…ALMV), 400–420 (KTHL…AGLA), 555–575 (AIST…LLGG), 874–894 (IIAM…RAIV), 898–918 (YLIG…VIVF), 930–950 (IPGL…MLLI), 973–993 (GGVI…LVFA), and 996–1016 (GSVV…TFLV). The interval 1056 to 1078 (RTKRKPLLPKEEEEQSPPDDDDL) is disordered. The span at 1066 to 1078 (EEEEQSPPDDDDL) shows a compositional bias: acidic residues.

The protein belongs to the resistance-nodulation-cell division (RND) (TC 2.A.6) family. MmpL subfamily.

The protein localises to the cell membrane. This is Probable transport protein MmpL8 (mmpL8) from Mycobacterium tuberculosis (strain ATCC 25177 / H37Ra).